The following is a 1274-amino-acid chain: Paired amphipathic helix protein Sin3a (1274 aa).

Disordered stretches follow at residues 1–26 and 85–110; these read MKRR…STEA and HHHP…PPVA. Phosphoserine is present on Ser10. The PAH 1 domain maps to 119–189; sequence QRLKVEDALS…MGFNTFLPPG (71 aa). The interaction with HCFC1 stretch occupies residues 119-196; sequence QRLKVEDALS…PPGYKIEVQT (78 aa). Glycyl lysine isopeptide (Lys-Gly) (interchain with G-Cter in SUMO2) cross-links involve residues Lys122 and Lys134. The segment at 205 to 297 is disordered; that stretch reads PGQVHQIPTH…ISLGTAPSLQ (93 aa). An interaction with REST region spans residues 205–479; it reads PGQVHQIPTH…KVRKALRSAE (275 aa). The segment covering 228-237 has biased composition (low complexity); the sequence is SQPSSQSAPT. The span at 252-266 shows a compositional bias: polar residues; that stretch reads KPSQLQAHTPASQQT. A compositionally biased stretch (pro residues) spans 267 to 282; that stretch reads PPLPPYASPRSPPVQP. Ser277 bears the Phosphoserine mark. Thr284 bears the Phosphothreonine mark. The span at 284–297 shows a compositional bias: polar residues; it reads TPVTISLGTAPSLQ. The PAH 2 domain maps to 300–383; it reads QPVEFNHAIN…SEFGQFLPDA (84 aa). Positions 398–443 are disordered; it reads DSVRNDHGGTVKKPQLNNKPQRPSQNGCQIRRHSGTGATPPVKKKP. A compositionally biased stretch (polar residues) spans 412 to 425; sequence QLNNKPQRPSQNGC. Residues 457–526 form the PAH 3 domain; sequence SKHGVGTESL…NWFKNFLGYK (70 aa). An interaction with SAP30 region spans residues 459 to 526; it reads HGVGTESLFF…NWFKNFLGYK (68 aa). Lys470 is modified (N6-acetyllysine). The interaction with NCOR1 stretch occupies residues 524 to 851; sequence GYKESVHLES…EMDVDEATGA (328 aa). The interactions with SUDS3 and SAP130 stretch occupies residues 525–660; the sequence is YKESVHLESF…KFRLDNTLGG (136 aa). A Glycyl lysine isopeptide (Lys-Gly) (interchain with G-Cter in SUMO2) cross-link involves residue Lys564. The interval 688–830 is interactions with HDAC1 and ARID4B; it reads NPSIAVPIVL…IPDLLFAQRG (143 aa). A Phosphoserine modification is found at Ser833. The span at 835–847 shows a compositional bias: acidic residues; that stretch reads VEEEEEEEMDVDE. Residues 835 to 865 are disordered; sequence VEEEEEEEMDVDEATGAPKKHNGVGGSPPKS. Ser861 bears the Phosphoserine mark. Lys866 and Lys876 each carry N6-acetyllysine. The tract at residues 889 to 968 is interaction with OGT; that stretch reads VNNNWYIFMR…YYPAFLDMVR (80 aa). Residues 904 to 933 adopt a coiled-coil conformation; it reads CLRLLRICSQAERQIEEENREREWEREVLG. Ser941, Ser1090, and Ser1113 each carry phosphoserine. Positions 1137–1157 are disordered; it reads CQRGREQQEKEGKEGNSKKTM. Residues 1139-1157 are compositionally biased toward basic and acidic residues; the sequence is RGREQQEKEGKEGNSKKTM.

In terms of assembly, interacts with ARID4B, BRMS1L, HCFC1, HDAC1, HDAC2, MXI1, SAP30L, SAP130, SFPQ and TOPORS. Interacts with OGT (via TPRs 1-6); the interaction mediates transcriptional repression in parallel with histone deacetylase. Interacts with BAZ2A, MXD1, MXD3, MXD4, MBD2, DACH1, NCOR1, NR4A2, REST, RLIM, SAP30, SETDB1, SMYD2, and SUDS3. Interacts with PHF12 in a complex composed of HDAC1, PHF12 and SAP30. Interacts with TET1; the interaction recruits SIN3A to gene promoters. The large PER complex involved in the histone deacetylation is composed of at least HDAC1, PER2, SFPQ and SIN3A. Interacts with KLF11. Interacts with PPHLN1. Found in a complex with YY1, GON4L and HDAC1. Interacts (via PAH2) with FOXK1. Interacts with FOXK2. Found in a complex composed of at least SINHCAF, SIN3A, HDAC1, SAP30, RBBP4, OGT and TET1. Interacts with SINHCAF. Interacts with SPHK2. Post-translationally, SUMO1 sumoylated by TOPORS. Probably desumoylated by SENP2. In terms of tissue distribution, widely expressed. Highest levels in testis, lung and thymus. Expressed at relatively high levels throughout brain development. In adult mice, expression is high in neurogenic regions such as the subventricular zone, rostral migratory stream, olfactory bulb and dentate gyrus.

Its subcellular location is the nucleus. The protein resides in the nucleolus. Its function is as follows. Acts as a transcriptional repressor. Corepressor for REST. Interacts with MXI1 to repress MYC responsive genes and antagonize MYC oncogenic activities. Also interacts with MXD1-MAX heterodimers to repress transcription by tethering SIN3A to DNA. Acts cooperatively with OGT to repress transcription in parallel with histone deacetylation. Involved in the control of the circadian rhythms. Required for the transcriptional repression of circadian target genes, such as PER1, mediated by the large PER complex through histone deacetylation. Cooperates with FOXK1 to regulate cell cycle progression probably by repressing cell cycle inhibitor genes expression. Required for cortical neuron differentiation and callosal axon elongation. The chain is Paired amphipathic helix protein Sin3a (Sin3a) from Mus musculus (Mouse).